The chain runs to 648 residues: Macrolide export ATP-binding/permease protein MacB (648 aa).

Residues 1–272 (MTPLLELKDI…RALAANKMRT (272 aa)) lie on the Cytoplasmic side of the membrane. Positions 5–243 (LELKDIRRSY…TGGTEPVVNT (239 aa)) constitute an ABC transporter domain. 41–48 (GASGSGKS) is an ATP binding site. The chain crosses the membrane as a helical span at residues 273 to 293 (LLTMLGIIIGIASVVSIVVVG). The Periplasmic segment spans residues 294–522 (DAAKQMVLAD…TVEKTTRTLQ (229 aa)). A helical membrane pass occupies residues 523–543 (LFLTLVAVISLVVGGIGVMNI). At 544-575 (MLVSVTERTREIGIRMAVGARASDVLQQFLIE) the chain is on the cytoplasmic side. Residues 576–596 (AVLVCLVGGALGITLSLLIAF) form a helical membrane-spanning segment. Residues 597-610 (TLQLFLPGWEIGFS) lie on the Periplasmic side of the membrane. The chain crosses the membrane as a helical span at residues 611-631 (PLALLLAFLCSTVTGILFGWL). At 632–648 (PARNAARLDPVDALARE) the chain is on the cytoplasmic side.

It belongs to the ABC transporter superfamily. Macrolide exporter (TC 3.A.1.122) family. As to quaternary structure, homodimer. Part of the tripartite efflux system MacAB-TolC, which is composed of an inner membrane transporter, MacB, a periplasmic membrane fusion protein, MacA, and an outer membrane component, TolC. The complex forms a large protein conduit and can translocate molecules across both the inner and outer membranes. Interacts with MacA.

The protein resides in the cell inner membrane. Its activity is regulated as follows. ATPase activity is stimulated by interaction with MacA and inhibited by vanadate. Functionally, part of the tripartite efflux system MacAB-TolC. MacB is a non-canonical ABC transporter that contains transmembrane domains (TMD), which form a pore in the inner membrane, and an ATP-binding domain (NBD), which is responsible for energy generation. When overexpressed, the system confers resistance against macrolides composed of 14- and 15-membered lactones but no or weak resistance against 16-membered ones. In addition, the system could also transport R-LPS or a similar glycolipid. The polypeptide is Macrolide export ATP-binding/permease protein MacB (Escherichia coli (strain K12)).